Here is a 263-residue protein sequence, read N- to C-terminus: Probable ribosomal RNA small subunit methyltransferase A (263 aa).

5 residues coordinate S-adenosyl-L-methionine: Leu12, Gly37, Glu58, Asp83, and Asn100.

Belongs to the class I-like SAM-binding methyltransferase superfamily. rRNA adenine N(6)-methyltransferase family. RsmA subfamily.

It localises to the cytoplasm. Its function is as follows. Specifically dimethylates two adjacent adenosines in the loop of a conserved hairpin near the 3'-end of 16S rRNA in the 30S particle. May play a critical role in biogenesis of 30S subunits. This is Probable ribosomal RNA small subunit methyltransferase A from Methanococcus maripaludis (strain C7 / ATCC BAA-1331).